Here is a 453-residue protein sequence, read N- to C-terminus: Tol-Pal system protein TolB (453 aa).

Positions 1-34 are cleaved as a signal peptide; it reads MYLIIKKTHKLPHWLQKVSLSIMLIIFLWKPALL.

The protein belongs to the TolB family. The Tol-Pal system is composed of five core proteins: the inner membrane proteins TolA, TolQ and TolR, the periplasmic protein TolB and the outer membrane protein Pal. They form a network linking the inner and outer membranes and the peptidoglycan layer.

It is found in the periplasm. Part of the Tol-Pal system, which plays a role in outer membrane invagination during cell division and is important for maintaining outer membrane integrity. TolB occupies a key intermediary position in the Tol-Pal system because it communicates directly with both membrane-embedded components, Pal in the outer membrane and TolA in the inner membrane. This is Tol-Pal system protein TolB from Blochmanniella pennsylvanica (strain BPEN).